We begin with the raw amino-acid sequence, 345 residues long: Dihydroorotate dehydrogenase (quinone) (345 aa).

FMN contacts are provided by residues 65-69 (AGLDK) and Thr89. Lys69 contributes to the substrate binding site. 114–118 (NRMGF) serves as a coordination point for substrate. The FMN site is built by Asn146 and Asn179. Asn179 provides a ligand contact to substrate. Ser182 serves as the catalytic Nucleophile. Residue Asn184 coordinates substrate. Residues Lys224 and Thr252 each contribute to the FMN site. Position 253-254 (253-254 (NT)) interacts with substrate. FMN is bound by residues Gly275, Gly304, and 325–326 (YT).

The protein belongs to the dihydroorotate dehydrogenase family. Type 2 subfamily. As to quaternary structure, monomer. It depends on FMN as a cofactor.

The protein resides in the cell membrane. It catalyses the reaction (S)-dihydroorotate + a quinone = orotate + a quinol. Its pathway is pyrimidine metabolism; UMP biosynthesis via de novo pathway; orotate from (S)-dihydroorotate (quinone route): step 1/1. In terms of biological role, catalyzes the conversion of dihydroorotate to orotate with quinone as electron acceptor. The sequence is that of Dihydroorotate dehydrogenase (quinone) from Janthinobacterium sp. (strain Marseille) (Minibacterium massiliensis).